Consider the following 363-residue polypeptide: MSTSKTITFTLFIAALLSSCDAATNATSQPLFPAILIFGDSTVDTGNNNYHSQTIFKAKHLPYGIDLPNHKASGRFTNGKIFSDIIATKLNIKQFVPPFLQPNLSDQEIVTGVCFASAGAGYDDHTSLSTQAIRVLDQQKMFKNYIARLKSIVGDKKAMEIIKNALVVISAGPNDFILNYYDIPSRRLEFPHISGYQDFVLQRLDNFVRELYSLGCRKIMVGGLPPMGCLPIQMTAKFRNALRFCLEQENRDSVLYNQKLQNLLPQIEASLTGSKILYSNVYDPMMDMMQNPSKYGFKETKRGCCGTGHLETSFMCNAFSPTCRNHSEFLFFDSIHPSEATYNYMGNFLDTQIRVWLSLRLKS.

Positions 1–22 (MSTSKTITFTLFIAALLSSCDA) are cleaved as a signal peptide. Residue Asn-25 is glycosylated (N-linked (GlcNAc...) asparagine). Ser-41 serves as the catalytic Nucleophile. Residues Asn-103 and Asn-325 are each glycosylated (N-linked (GlcNAc...) asparagine). Active-site residues include Asp-333 and His-336.

The protein belongs to the 'GDSL' lipolytic enzyme family.

The protein resides in the secreted. This Arabidopsis thaliana (Mouse-ear cress) protein is GDSL esterase/lipase At2g24560.